The primary structure comprises 531 residues: Transcription termination/antitermination protein NusA (531 aa).

The 71-residue stretch at 165–235 (GEVIEAKVED…SLWPITLSRS (71 aa)) folds into the S1 motif domain. A KH domain is found at 340–410 (DTSIEVVVPA…FGIKKRREKI (71 aa)). Residues 463–475 (EKQVTPKEKEKVQ) show a composition bias toward basic and acidic residues. Residues 463–531 (EKQVTPKEKE…KQTFDSFDDL (69 aa)) form a disordered region. The segment covering 476–490 (PKAKVHSNSHSKKPA) has biased composition (basic residues). Positions 502 to 512 (ASDKNLKKDQV) are enriched in basic and acidic residues. Polar residues predominate over residues 513 to 531 (DNNQTNPQTKQTFDSFDDL).

This sequence belongs to the NusA family. In terms of assembly, monomer. Binds directly to the core enzyme of the DNA-dependent RNA polymerase and to nascent RNA.

It is found in the cytoplasm. Participates in both transcription termination and antitermination. The polypeptide is Transcription termination/antitermination protein NusA (Mycoplasma genitalium (strain ATCC 33530 / DSM 19775 / NCTC 10195 / G37) (Mycoplasmoides genitalium)).